The chain runs to 196 residues: Pro-FMRFamide-related neuropeptide VF (196 aa).

The N-terminal stretch at 1–26 (MEIISSKLFILLTLATSSLLTSNIFC) is a signal peptide. Residues 27 to 55 (ADELVMSNLHSKENYDKYSEPRGYPKGER) constitute a propeptide that is removed on maturation. Residue Phe92 is modified to Phenylalanine amide. Propeptides lie at residues 95–99 (NVQEE) and 115–121 (NMEVSLV). A Phenylalanine amide modification is found at Phe131. The propeptide occupies 134–196 (TTTAKSVCRM…IDDAELKQEK (63 aa)).

The protein belongs to the FARP (FMRFamide related peptide) family. As to expression, specifically expressed in the retina. In terms of tissue distribution, detected in the hypothalamus.

It localises to the secreted. Efficiently inhibits forskolin-induced production of cAMP. Acts as a potent negative regulator of gonadotropin synthesis and secretion. Induces secretion of prolactin. In terms of biological role, efficiently inhibits forskolin-induced production of cAMP. Blocks morphine-induced analgesia. Its function is as follows. Shows no inhibitory activity of forskolin-induced production of cAMP. The sequence is that of Pro-FMRFamide-related neuropeptide VF from Homo sapiens (Human).